A 579-amino-acid chain; its full sequence is MKVVPSEKIKPNWWRETSVYQIYPASFKDSNGDGFGDLEGIISKVDYLKALNVESIWLCPIYPSPLKDMGYDVSDYKQIDSRYGTLEDLDRLMKALHERDMKLVMDLVLNHTSDQHEWFKESRSSKTNPKRDWYFWKPARYNEKGERLPPNNWRSYFDTSAWEWDEATQEYYLHLWSVGQPDLNWETPKVREAVHDILRFWLDRGVDGFRLDAINMISKDQRFLDAPITDDRYEYQLAYQYYANGPRIHEYLNGIGNILTEYDAFSVGEMPYVLDTNEILHVVGADRRELTMIFQFDFVDLDLDPNQHKYIEGSWELSDLKKSLKKWQSALLSGGGWNASFIENHDQTRTVSRYLSDSPKYRAYSSKLMALFIIFQSGTPFVFQGQELALANIPRDWPIDEYLDVETQNFWKLFMSGNPSQEEIEKTMDIVNKRARDNGRTPMHWDSSPNGGFTKAGVKPWMRVTNDYKEWNAANQVNDPESPYTFWSKALELRKELKDAVVYGSFELISEEDPSIVAFVRESSTYKLIILLNFTGNKVSYDCPLNLTSYEILLDNYKDFICMTSPVTLNPYQAVLLKL.

The Nucleophile role is filled by aspartate 212. Glutamate 269 functions as the Proton donor in the catalytic mechanism.

The protein belongs to the glycosyl hydrolase 13 family.

The enzyme catalyses Hydrolysis of terminal, non-reducing (1-&gt;4)-linked alpha-D-glucose residues with release of alpha-D-glucose.. The polypeptide is Alpha-glucosidase (mal1) (Schizosaccharomyces pombe (strain 972 / ATCC 24843) (Fission yeast)).